The sequence spans 246 residues: MNYRFGINMKIVWCITGAGHLLRESFQVMKRLKEEIEDLKVTTLVSRAGEEVVKMYGLFGELYNISNGNYYEELILEREHPYSSPITGRLSLGKYDYLICSPATGNTVAKVVNGIADSLVTNAIAQAGKGFVKSLIVPVDYKAGIVTTKLPYAIDKKKCKLCLKCINVCPNGAIVKRDNFVEILLSKCLGCGNCKKVCPYNAIIEGKEIKMRVRKIDAENTRKLMELEDVIVLKHPYEILEFFNIR.

2 consecutive 4Fe-4S ferredoxin-type domains span residues 150 to 178 (LPYA…VKRD) and 179 to 208 (NFVE…EGKE). [4Fe-4S] cluster is bound by residues cysteine 159, cysteine 162, cysteine 165, cysteine 169, cysteine 188, cysteine 191, cysteine 194, and cysteine 198.

As to quaternary structure, homodimer. [4Fe-4S] cluster serves as cofactor.

The enzyme catalyses 5,6,7,8-tetrahydromethanopterin + A = 7,8-dihydromethanopterin + AH2. Its pathway is cofactor biosynthesis; 5,6,7,8-tetrahydromethanopterin biosynthesis. In terms of biological role, involved in the biosynthesis of tetrahydromethanopterin, a coenzyme used in methanogenesis. Catalyzes the reduction of dihydromethanopterin (H(2)MPT) to tetrahydromethanopterin (H(4)MPT). Ferredoxin may serve as an electron donor. In Methanocaldococcus jannaschii (strain ATCC 43067 / DSM 2661 / JAL-1 / JCM 10045 / NBRC 100440) (Methanococcus jannaschii), this protein is Dihydromethanopterin reductase (acceptor).